We begin with the raw amino-acid sequence, 917 residues long: Hexokinase-2 (917 aa).

Residue methionine 1 is modified to N-acetylmethionine. The interval 1-16 (MIASHMIACLFTELNQ) is mitochondrial-binding peptide (MBP). Hexokinase domains follow at residues 16–458 (QNQV…MVTA) and 464–906 (ADQH…LITA). ATP-binding positions include arginine 30 and 84 to 89 (DLGGTN). The hexokinase small subdomain 1 stretch occupies residues 73-207 (DGTEHGEFLA…DFDIDIVAVV (135 aa)). 84–88 (DLGGT) contributes to the D-glucose 6-phosphate binding site. D-glucose is bound by residues 155–156 (SF), 172–173 (TK), and 208–209 (ND). The hexokinase large subdomain 1 stretch occupies residues 208–447 (NDTVGTMMTC…CDVRFLRSED (240 aa)). Aspartate 209 and threonine 232 together coordinate D-glucose 6-phosphate. D-glucose is bound by residues asparagine 235, glutamate 260, and 291–294 (QLFE). 413–415 (DGS) contacts D-glucose 6-phosphate. 425 to 426 (KR) is an ATP binding site. Residues serine 449 and 532–536 (DLGGT) each bind D-glucose 6-phosphate. The tract at residues 521–655 (DGTEKGDFLA…EFDLDVVAVV (135 aa)) is hexokinase small subdomain 2. Residue 532–537 (DLGGTN) coordinates ATP. Residues 603–604 (SF), 620–621 (TK), and 656–657 (ND) contribute to the D-glucose site. A hexokinase large subdomain 2 region spans residues 656–895 (NDTVGTMMTC…CDVSFLESED (240 aa)). D-glucose 6-phosphate contacts are provided by aspartate 657 and threonine 680. Threonine 680 contacts ATP. Residues 682–683 (SN), glutamate 708, and 739–742 (QRFE) each bind D-glucose. Residues 747–748 (GM), 784–788 (TKFLS), and 863–867 (TLYKL) contribute to the ATP site. D-glucose 6-phosphate contacts are provided by residues 861-863 (DGT) and serine 897.

The protein belongs to the hexokinase family. As to quaternary structure, monomer. Interacts with TIGAR; the interaction increases hexokinase activity in a hypoxia- and HIF1A-dependent manner.

The protein resides in the mitochondrion outer membrane. It is found in the cytoplasm. The protein localises to the cytosol. It carries out the reaction a D-hexose + ATP = a D-hexose 6-phosphate + ADP + H(+). The catalysed reaction is D-fructose + ATP = D-fructose 6-phosphate + ADP + H(+). The enzyme catalyses D-glucose + ATP = D-glucose 6-phosphate + ADP + H(+). The protein operates within carbohydrate metabolism; hexose metabolism. Its pathway is carbohydrate degradation; glycolysis; D-glyceraldehyde 3-phosphate and glycerone phosphate from D-glucose: step 1/4. Hexokinase activity is specifically inhibited by 2,6-disubstituted glucosamines. Catalyzes the phosphorylation of hexose, such as D-glucose and D-fructose, to hexose 6-phosphate (D-glucose 6-phosphate and D-fructose 6-phosphate, respectively). Mediates the initial step of glycolysis by catalyzing phosphorylation of D-glucose to D-glucose 6-phosphate. Plays a key role in maintaining the integrity of the outer mitochondrial membrane by preventing the release of apoptogenic molecules from the intermembrane space and subsequent apoptosis. This chain is Hexokinase-2, found in Rattus norvegicus (Rat).